The sequence spans 346 residues: Probable RNA methyltransferase PA1839 (346 aa).

Glutamate 91 serves as the catalytic Proton acceptor. The Radical SAM core domain occupies 94 to 320; it reads LLPRGGLCVS…TKVRNSAGQD (227 aa). An intrachain disulfide couples cysteine 101 to cysteine 325. Positions 108, 112, and 115 each coordinate [4Fe-4S] cluster. S-adenosyl-L-methionine is bound by residues 153–154, serine 183, 206–208, and asparagine 282; these read GE and SLH. The active-site S-methylcysteine intermediate is cysteine 325.

The protein belongs to the radical SAM superfamily. RlmN family. [4Fe-4S] cluster serves as cofactor.

Its subcellular location is the cytoplasm. This chain is Probable RNA methyltransferase PA1839, found in Pseudomonas aeruginosa (strain ATCC 15692 / DSM 22644 / CIP 104116 / JCM 14847 / LMG 12228 / 1C / PRS 101 / PAO1).